The following is an 87-amino-acid chain: Phosphoribosyl-ATP pyrophosphatase (87 aa).

This sequence belongs to the PRA-PH family.

Its subcellular location is the cytoplasm. It catalyses the reaction 1-(5-phospho-beta-D-ribosyl)-ATP + H2O = 1-(5-phospho-beta-D-ribosyl)-5'-AMP + diphosphate + H(+). The protein operates within amino-acid biosynthesis; L-histidine biosynthesis; L-histidine from 5-phospho-alpha-D-ribose 1-diphosphate: step 2/9. This chain is Phosphoribosyl-ATP pyrophosphatase, found in Salinibacter ruber (strain DSM 13855 / M31).